The primary structure comprises 466 residues: Asparagine--tRNA ligase (466 aa).

This sequence belongs to the class-II aminoacyl-tRNA synthetase family. Homodimer.

It localises to the cytoplasm. It carries out the reaction tRNA(Asn) + L-asparagine + ATP = L-asparaginyl-tRNA(Asn) + AMP + diphosphate + H(+). The chain is Asparagine--tRNA ligase from Vibrio parahaemolyticus serotype O3:K6 (strain RIMD 2210633).